The primary structure comprises 767 residues: Receptor-type tyrosine-protein phosphatase-like ida-1 (767 aa).

The N-terminal stretch at 1–19 is a signal peptide; sequence MRFFHSIIVLLFSISTGSA. Over 20 to 398 the chain is Lumenal; the sequence is FLLYGCNLSE…SLPVESSERD (379 aa). 2 N-linked (GlcNAc...) asparagine glycosylation sites follow: Asn26 and Asn146. Residues 399–419 traverse the membrane as a helical segment; sequence WLLMPVLFVCAFTVTALGLVA. Over 420-767 the chain is Cytoplasmic; that stretch reads AVQIARSRRH…NHLLKSIATK (348 aa). Residues 527-756 form the Tyrosine-protein phosphatase domain; the sequence is SQNRTILPFD…KLVYGCVAQE (230 aa).

The protein belongs to the protein-tyrosine phosphatase family. Receptor class 8 subfamily. Post-translationally, proteolytically cleaved probably at a dibasic consensus sequence by egl-3. In terms of tissue distribution, in hermaphrodites specifically expressed in neurons and in particular in the head nerve ring (ADE, ALA, ASI, ASK, AUA, ASG, AVH and AVJ neurons), in the ventral nerve cord, pre-anal ganglia (PVP neuron), in the tail (PHA, PHB and PHC neurons) and in vulval motor neurons VC and HSN and the vulval uv1 cells. In males, also expressed in neurons anterior to the nerve ring and male-specific neurons in the tail.

The protein localises to the cytoplasmic vesicle membrane. Its subcellular location is the perikaryon. It localises to the cell projection. The protein resides in the axon. It is found in the dendrite. Regulates dense-core vesicle (DCV) trafficking and/or secretion. Probably by controlling DCV trafficking, plays a role in the AVG neuron-mediated formation of the right axon tract of the ventral nerve cord. Involved in locomotion by regulating acetylcholine release. Probably by controlling the secretion of FLP neuropeptides, regulates the turning step of male mating behavior. Plays a role in preventing dauer formation. The sequence is that of Receptor-type tyrosine-protein phosphatase-like ida-1 from Caenorhabditis elegans.